Here is a 953-residue protein sequence, read N- to C-terminus: Serine-aspartate repeat-containing protein C (953 aa).

Positions 1–50 are cleaved as a signal peptide; it reads MNNKKTATNRKGMIPNRLNKFSIRKYSVGTASILVGTTLIFGLSGHEAKA. Residues 51-160 are disordered; it reads AEHTNGELNQ…AKNVSTTPKT (110 aa). The interval 51–495 is ligand binding A region; the sequence is AEHTNGELNQ…GSSTANGDQK (445 aa). Over residues 56-71 the composition is skewed to polar residues; the sequence is GELNQSKNETTAPSEN. Positions 72–83 are enriched in basic and acidic residues; the sequence is KTTEKVDSRQLK. A compositionally biased stretch (polar residues) spans 84–114; that stretch reads DNTQTATADQPKVTMSDSATVKETSSNMQSP. Residues 115 to 132 show a composition bias toward low complexity; sequence QNATASQSTTQTSNVTTN. Residues 133–160 are compositionally biased toward polar residues; sequence DKSSTTYSNETDKSNLTQAKNVSTTPKT. 2 CNA-B domains span residues 496–606 and 607–717; these read KYNL…YKTP and KYSL…EEET. The segment at 678–933 is disordered; that stretch reads TQTGTNTTED…NNSNNGTLFG (256 aa). Acidic residues-rich tracts occupy residues 685–695 and 712–892; these read TEDDKDADGGE and YYEE…DSDS. The short motif at 916–920 is the LPXTG sorting signal element; that stretch reads LPETG. Residues 918–933 show a composition bias toward low complexity; it reads ETGSENNNSNNGTLFG. Residue threonine 919 is modified to Pentaglycyl murein peptidoglycan amidated threonine. Residues 920-953 constitute a propeptide, removed by sortase; sequence GSENNNSNNGTLFGGLFAALGSLLLFGRRKKQNK.

The protein belongs to the serine-aspartate repeat-containing protein (SDr) family. In terms of assembly, homodimerizes; via N2-Domain. Interacts with host NRXN1; this interaction mediates bacterial attachment to host cells.

The protein resides in the secreted. It localises to the cell wall. Functionally, cell surface-associated calcium-binding protein which plays an important role in adhesion and pathogenesis. Mediates interactions with components of the extracellular matrix such as host NRXN1 to promote bacterial adhesion. In Staphylococcus aureus (strain Mu50 / ATCC 700699), this protein is Serine-aspartate repeat-containing protein C (sdrC).